We begin with the raw amino-acid sequence, 299 residues long: Bifunctional protein FolD (299 aa).

Residues 169 to 171 (GRS), Ser194, and Ile235 each bind NADP(+).

Belongs to the tetrahydrofolate dehydrogenase/cyclohydrolase family. In terms of assembly, homodimer.

It catalyses the reaction (6R)-5,10-methylene-5,6,7,8-tetrahydrofolate + NADP(+) = (6R)-5,10-methenyltetrahydrofolate + NADPH. The enzyme catalyses (6R)-5,10-methenyltetrahydrofolate + H2O = (6R)-10-formyltetrahydrofolate + H(+). Its pathway is one-carbon metabolism; tetrahydrofolate interconversion. In terms of biological role, catalyzes the oxidation of 5,10-methylenetetrahydrofolate to 5,10-methenyltetrahydrofolate and then the hydrolysis of 5,10-methenyltetrahydrofolate to 10-formyltetrahydrofolate. In Nostoc sp. (strain PCC 7120 / SAG 25.82 / UTEX 2576), this protein is Bifunctional protein FolD.